The chain runs to 601 residues: Aspartate--tRNA ligase (601 aa).

Position 183 (glutamate 183) interacts with L-aspartate. The segment at 207–210 (QIFK) is aspartate. Arginine 229 is a binding site for L-aspartate. ATP is bound by residues 229–231 (RDE) and glutamine 238. Histidine 457 provides a ligand contact to L-aspartate. Glutamate 497 contributes to the ATP binding site. Arginine 504 lines the L-aspartate pocket. Residue 549–552 (GIDR) participates in ATP binding.

It belongs to the class-II aminoacyl-tRNA synthetase family. Type 1 subfamily. As to quaternary structure, homodimer.

It localises to the cytoplasm. It catalyses the reaction tRNA(Asp) + L-aspartate + ATP = L-aspartyl-tRNA(Asp) + AMP + diphosphate. In terms of biological role, catalyzes the attachment of L-aspartate to tRNA(Asp) in a two-step reaction: L-aspartate is first activated by ATP to form Asp-AMP and then transferred to the acceptor end of tRNA(Asp). This Leptospira interrogans serogroup Icterohaemorrhagiae serovar Lai (strain 56601) protein is Aspartate--tRNA ligase.